The chain runs to 452 residues: Protein MLF3 (452 aa).

Residues serine 8, serine 11, serine 14, serine 56, serine 74, and serine 79 each carry the phosphoserine modification. The disordered stretch occupies residues 61 to 94 (SGSEVRTPSLRKNSNNVSSPLDNVIPTSRSASNS). Residues 64-81 (EVRTPSLRKNSNNVSSPL) show a composition bias toward polar residues. A Phosphothreonine modification is found at threonine 121. Serine 145, serine 156, and serine 160 each carry phosphoserine. Position 169 is a phosphothreonine (threonine 169). Serine 171 carries the phosphoserine modification. Residues 171 to 182 (SATLPSSESSPA) are compositionally biased toward polar residues. Positions 171 to 220 (SATLPSSESSPASPDLKLSRSHSHSAATRPTLNNINNTGMTTTTSNGEPN) are disordered. Threonine 173 is subject to Phosphothreonine. Serine 183 and serine 189 each carry phosphoserine. A compositionally biased stretch (low complexity) spans 201–216 (TLNNINNTGMTTTTSN). Tyrosine 227 bears the Phosphotyrosine mark. 3 positions are modified to phosphoserine: serine 228, serine 257, and serine 265. 2 disordered regions span residues 290 to 321 (PATSPYVSPQQSARQYSNNANNNAKSPKNRSS) and 348 to 402 (IESS…AIGK). A Phosphotyrosine modification is found at tyrosine 295. 3 positions are modified to phosphoserine: serine 297, serine 320, and serine 353. The segment covering 299–321 (QQSARQYSNNANNNAKSPKNRSS) has biased composition (low complexity). Low complexity predominate over residues 365-383 (PSFPLSSSLRSSANLASNP). The segment covering 384 to 398 (ELATQTPLSTSSSYT) has biased composition (polar residues). Position 439 is a phosphoserine (serine 439).

To yeast VHS2.

The protein localises to the cytoplasm. The sequence is that of Protein MLF3 (MLF3) from Saccharomyces cerevisiae (strain ATCC 204508 / S288c) (Baker's yeast).